The primary structure comprises 29 residues: Kunitz-type trypsin inhibitor IVTI (29 aa).

Belongs to the protease inhibitor I3 (leguminous Kunitz-type inhibitor) family. In terms of assembly, monomer and dimer.

Functionally, inhibits bovine trypsin but not chymotrypsin. Also inhibits trypsin-like enzymes from midgut of several lepidopteran species and inhibits larval development in those species. Has fungicidal activity against yeast C.buinensis. Has a bacteriostatic effect against E.coli. Is not cytotoxic. This is Kunitz-type trypsin inhibitor IVTI from Inga vera (River koko).